Here is a 370-residue protein sequence, read N- to C-terminus: Glutamate 5-kinase (370 aa).

Lysine 12 contacts ATP. Substrate is bound by residues serine 52, aspartate 139, and asparagine 151. ATP contacts are provided by residues 171-172 (SD) and 213-219 (TGGMFTK). Residues 278-356 (QAHIAVDAGA…SDIESILGYS (79 aa)) enclose the PUA domain.

Belongs to the glutamate 5-kinase family.

The protein localises to the cytoplasm. It catalyses the reaction L-glutamate + ATP = L-glutamyl 5-phosphate + ADP. Its pathway is amino-acid biosynthesis; L-proline biosynthesis; L-glutamate 5-semialdehyde from L-glutamate: step 1/2. Functionally, catalyzes the transfer of a phosphate group to glutamate to form L-glutamate 5-phosphate. The protein is Glutamate 5-kinase of Herpetosiphon aurantiacus (strain ATCC 23779 / DSM 785 / 114-95).